Here is a 477-residue protein sequence, read N- to C-terminus: Bifunctional protein HldE (477 aa).

Positions 1–318 (MKVNLPAFER…ENAVRGRADT (318 aa)) are ribokinase. 195 to 198 (NLSE) is an ATP binding site. Residue aspartate 264 is part of the active site. A cytidylyltransferase region spans residues 344–477 (MTNGVFDILH…IKKIQTESEK (134 aa)).

In the N-terminal section; belongs to the carbohydrate kinase PfkB family. It in the C-terminal section; belongs to the cytidylyltransferase family. Homodimer.

It carries out the reaction D-glycero-beta-D-manno-heptose 7-phosphate + ATP = D-glycero-beta-D-manno-heptose 1,7-bisphosphate + ADP + H(+). It catalyses the reaction D-glycero-beta-D-manno-heptose 1-phosphate + ATP + H(+) = ADP-D-glycero-beta-D-manno-heptose + diphosphate. It participates in nucleotide-sugar biosynthesis; ADP-L-glycero-beta-D-manno-heptose biosynthesis; ADP-L-glycero-beta-D-manno-heptose from D-glycero-beta-D-manno-heptose 7-phosphate: step 1/4. It functions in the pathway nucleotide-sugar biosynthesis; ADP-L-glycero-beta-D-manno-heptose biosynthesis; ADP-L-glycero-beta-D-manno-heptose from D-glycero-beta-D-manno-heptose 7-phosphate: step 3/4. Functionally, catalyzes the phosphorylation of D-glycero-D-manno-heptose 7-phosphate at the C-1 position to selectively form D-glycero-beta-D-manno-heptose-1,7-bisphosphate. In terms of biological role, catalyzes the ADP transfer from ATP to D-glycero-beta-D-manno-heptose 1-phosphate, yielding ADP-D-glycero-beta-D-manno-heptose. This is Bifunctional protein HldE from Salmonella paratyphi A (strain ATCC 9150 / SARB42).